We begin with the raw amino-acid sequence, 358 residues long: Beta-lactamase (358 aa).

Serine 60 serves as the catalytic Acyl-ester intermediate. Residue tyrosine 146 is the Proton acceptor of the active site. 311 to 313 (KTG) contacts substrate.

Belongs to the class-C beta-lactamase family.

The protein resides in the periplasm. It catalyses the reaction a beta-lactam + H2O = a substituted beta-amino acid. This protein is a serine beta-lactamase with a substrate specificity for cephalosporins. This Pseudomonas fluorescens protein is Beta-lactamase.